Consider the following 92-residue polypeptide: Defensin-like protein 294 (92 aa).

Positions 1–26 (MASRATSLFIFFFLISCTFMLLETNA) are cleaved as a signal peptide. 3 cysteine pairs are disulfide-bonded: cysteine 63–cysteine 82, cysteine 69–cysteine 87, and cysteine 75–cysteine 89.

This sequence belongs to the DEFL family.

Its subcellular location is the secreted. The chain is Defensin-like protein 294 from Arabidopsis thaliana (Mouse-ear cress).